The chain runs to 292 residues: uncharacterized protein (292 aa).

4 helical membrane-spanning segments follow: residues 17–37 (LFYT…FPAL), 135–155 (LIAV…IGQL), 166–186 (TTLW…YDIV), and 216–236 (FHGV…TALY). The disordered stretch occupies residues 267–292 (EKSEDKKSIVTSRIEEENEDEISDYE). Residues 282-292 (EENEDEISDYE) are compositionally biased toward acidic residues.

It localises to the membrane. This is an uncharacterized protein from Caenorhabditis elegans.